Here is a 149-residue protein sequence, read N- to C-terminus: Oocyte-expressed protein (149 aa).

Positions 49–110 (PLVFYLEAWL…RVQNRVKSVL (62 aa)) constitute a KH; atypical domain.

Belongs to the KHDC1 family. As to quaternary structure, component of the subcortical maternal complex (SCMC), at least composed of NLRP5, KHDC3, OOEP, and TLE6. Within the complex, interacts with NLRP5, KHDC3 and TLE6. As part of the SCMC interacts with the SCMC-associated protein NLRP4F. The SCMC may facilitate translocation of its components between the nuclear and cytoplasmic compartments. Forms a scaffold complex with KHDC3/FILIA, and interacts with BLM and TRIM25 at DNA replication forks.

It is found in the cytoplasm. Its subcellular location is the nucleus. Functionally, component of the subcortical maternal complex (SCMC), a multiprotein complex that plays a key role in early embryonic development. The SCMC complex is a structural constituent of cytoplasmic lattices, which consist in fibrous structures found in the cytoplasm of oocytes and preimplantation embryos. They are required to store maternal proteins critical for embryonic development, such as proteins that control epigenetic reprogramming of the preimplantation embryo, and prevent their degradation or activation. As part of the OOEP-KHDC3 scaffold, recruits BLM and TRIM25 to DNA replication forks, thereby promoting the ubiquitination of BLM by TRIM25, enhancing BLM retainment at replication forks and therefore promoting stalled replication fork restart. Positively regulates the homologous recombination-mediated DNA double-strand break (DSB) repair pathway by regulating ATM activation and RAD51 recruitment to DSBs in oocytes. Thereby contributes to oocyte survival and the resumption and completion of meiosis. The chain is Oocyte-expressed protein (OOEP) from Canis lupus familiaris (Dog).